A 509-amino-acid polypeptide reads, in one-letter code: Flotillin-like protein FloT (509 aa).

The Cytoplasmic portion of the chain corresponds to 1-3 (MTM). Residues 4-24 (PIIMIIGVVFFLLIALIAVFI) lie within the membrane without spanning it. Over 25–509 (TKYRTAGPDE…KEAKTIQKSE (485 aa)) the chain is Cytoplasmic. Residues 119–301 (AAEQFLGKSK…KIIERQKQIE (183 aa)) are PHB domain. The segment at 203–509 (RIAQVKRDAD…KEAKTIQKSE (307 aa)) is required for correct localization. 4 short sequence motifs (EA repeat) span residues 342 to 344 (AEA), 357 to 360 (AEAE), 370 to 373 (AEAE), and 390 to 394 (AEAEA). The tract at residues 485–509 (KGNVKQSINELTNEIKEAKTIQKSE) is not required for correct localization.

Belongs to the band 7/mec-2 family. Flotillin subfamily. As to quaternary structure, homooligomerizes. Oligomerizes in very large complexes in vitro. Interacts with FloA, FtsH, FtsX, OppA, SdhA and SecY in detergent-resistant membrane (DRM) fractions. Interacts with FtsH at midcell. Interacts with FloA. Interacts in vivo with KinC, FloA, FtsH and ResE. Interacts with ResE, colocalizes with ResE in FloT-only membrane rafts. Another study shows nearly complete colocalization with NfeD2, but only minor colocalization with FtsH or KinC.

It localises to the cell membrane. It is found in the membrane raft. Its function is as follows. Found in functional membrane microdomains (FMM) that may be equivalent to eukaryotic membrane rafts. FMMs are highly dynamic and increase in number as cells age. FloA and FloT function is partially redundant; double deletions have marked synthetic phenotypes. Flotillins are thought to be important factors in membrane fluidity, especially during periods of rapid growth in rich media. Whether specific proteins are associated with FMMs is controversial; in one study FloT rafts have been shown to include proteins involved in adaptation to stationary phase, while FloA-FloT rafts include proteins involved in differentiation including sporulation, biofilm formation and DNA uptake competence. Another (more finely resolved) study only showed association of NfeD2 with FloT rafts of all the proteins examined. Aids homooligomerization of KinC and KinD but not KinB, may prevent incorrect hetero-association of the above kinases. Simultaneous overexpression of both FloA and FloT leads to defects in cell division and differentiation, in part caused by stabilization of FtsH and its subsequent increased ability to degrade proteins. Cells make more biofilm, are about half as long, have less EzrA and more frequent Z-rings. Involved in spatial organization of membranes, perhaps recruiting proteins (e.g. NfeD2) to specific membrane regions. Plays a role in phosphorylation of master regulator Spo0A, an early sporulation event. Plays a non-redundant role with dynamin-like protein A (dynA) in membrane dynamics and cell shape. The protein is Flotillin-like protein FloT of Bacillus subtilis (strain 168).